Reading from the N-terminus, the 435-residue chain is Histidine--tRNA ligase (435 aa).

The protein belongs to the class-II aminoacyl-tRNA synthetase family. In terms of assembly, homodimer.

It localises to the cytoplasm. The catalysed reaction is tRNA(His) + L-histidine + ATP = L-histidyl-tRNA(His) + AMP + diphosphate + H(+). The sequence is that of Histidine--tRNA ligase from Synechococcus elongatus (strain ATCC 33912 / PCC 7942 / FACHB-805) (Anacystis nidulans R2).